A 246-amino-acid polypeptide reads, in one-letter code: 1-(5-phosphoribosyl)-5-[(5-phosphoribosylamino)methylideneamino] imidazole-4-carboxamide isomerase (246 aa).

The active-site Proton acceptor is Asp-8. The active-site Proton donor is the Asp-131.

It belongs to the HisA/HisF family.

Its subcellular location is the cytoplasm. The enzyme catalyses 1-(5-phospho-beta-D-ribosyl)-5-[(5-phospho-beta-D-ribosylamino)methylideneamino]imidazole-4-carboxamide = 5-[(5-phospho-1-deoxy-D-ribulos-1-ylimino)methylamino]-1-(5-phospho-beta-D-ribosyl)imidazole-4-carboxamide. Its pathway is amino-acid biosynthesis; L-histidine biosynthesis; L-histidine from 5-phospho-alpha-D-ribose 1-diphosphate: step 4/9. The polypeptide is 1-(5-phosphoribosyl)-5-[(5-phosphoribosylamino)methylideneamino] imidazole-4-carboxamide isomerase (Bordetella bronchiseptica (strain ATCC BAA-588 / NCTC 13252 / RB50) (Alcaligenes bronchisepticus)).